Reading from the N-terminus, the 368-residue chain is MNKTIMALAIMMASFAANASVLPETPVPFKSGTGAIDNDTVYIGLGSAGTAWYKLDTQAKDKKWTALAAFPGGPRDQATSAFIDGNLYVFGGIGKNSEGLTQVFNDVHKYNPKTNSWVKLMSLAPMGMAGHVTFVHNGKAYVTGGVNQNIFNGYFEDLNEAGKDSTAIDKINAHYFDKKAEDYFFNKFLLSFDPSTQQWSYAGESPWYGTAGAAVVNKGDKTWLINGEAKPGLRTDAVFELDFTGNNLKWNKLDPVSSPDGVAGGFAGISNDSLIFAGGAGFKGSRENYQNGKNYAHEGLKKSYSTDIHLWHNGKWDKSGELSQGRAYGVSLPWNNSLLIIGGETAGGKAVTDSVLISVKDNKVTVQN.

An N-terminal signal peptide occupies residues 1–19 (MNKTIMALAIMMASFAANA). Kelch repeat units follow at residues 40–84 (TVYI…AFID), 86–137 (NLYV…FVHN), 139–173 (KAYVTGGVNQNIFNGYFEDLNEAGKDSTAIDKINA), 174–219 (HYFD…VNKG), 222–265 (TWLI…VAGG), 287–336 (ENYQ…PWNN), and 338–367 (LLIIGGETAGGKAVTDSVLISVKDNKVTVQ). The Proton acceptor role is filled by E228.

The protein belongs to the NanM family. Homodimer.

It is found in the periplasm. The enzyme catalyses N-acetyl-alpha-neuraminate = N-acetyl-beta-neuraminate. Converts alpha-N-acetylneuranimic acid (Neu5Ac) to the beta-anomer, accelerating the equilibrium between the alpha- and beta-anomers. Probably facilitates sialidase-negative bacteria to compete successfully for limited amounts of extracellular Neu5Ac, which is likely taken up in the beta-anomer. In addition, the rapid removal of sialic acid from solution might be advantageous to the bacterium to damp down host responses. The polypeptide is N-acetylneuraminate epimerase (Shigella sonnei (strain Ss046)).